An 859-amino-acid chain; its full sequence is Suppressor protein MPT5 (859 aa).

Residues Met85–Thr108 are disordered. A compositionally biased stretch (low complexity) spans Asn86–Thr108. In terms of domain architecture, PUM-HD spans Asp188–Ala596. 8 Pumilio repeats span residues Pro209–Glu247, Gln248–Gln283, Thr284–Lys320, Glu325–Asp362, Ala363–Val400, Lys401–Asn438, Arg439–Asn474, and Asp503–Lys539. The disordered stretch occupies residues Thr620–Thr658. Over residues Pro628–Ala645 the composition is skewed to basic residues. Phosphoserine is present on residues Ser662, Ser834, and Ser838.

The protein resides in the cytoplasm. Its function is as follows. RNA-binding protein involved in post-transcriptional regulation. Negatively regulates expression of HO by binding to the 3'-UTR of HO mRNA. Predominantly binds to mRNAs encoding chromatin modifiers and spindle pole body components. Recognizes and binds to 5'-TGTAA[CT]A[AT]TA-3' in the 3'-UTR of target mRNAs. Multicopy suppressor of POP2 mutation. Required for high temperature growth. This is Suppressor protein MPT5 (MPT5) from Saccharomyces cerevisiae (strain ATCC 204508 / S288c) (Baker's yeast).